Reading from the N-terminus, the 314-residue chain is Protein EXORDIUM (314 aa).

Positions 1–21 (MYLLVFKLFLFLSLLQISVSA) are cleaved as a signal peptide.

Belongs to the EXORDIUM family. Expressed in root tips, vascular tissue of roots, shoot apex, rosette leaves and embryos.

The protein localises to the secreted. It localises to the extracellular space. It is found in the apoplast. In terms of biological role, required for cell expansion in leaves. May mediate brassinosteroid (BR)-induced leaf growth. May play a role in the control of BR responses in roots. May be involved in signaling processes that coordinate BR responses with environmental or developmental signals. This chain is Protein EXORDIUM (EXO), found in Arabidopsis thaliana (Mouse-ear cress).